Reading from the N-terminus, the 97-residue chain is Co-chaperonin GroES (97 aa).

This sequence belongs to the GroES chaperonin family. Heptamer of 7 subunits arranged in a ring. Interacts with the chaperonin GroEL.

It localises to the cytoplasm. Its function is as follows. Together with the chaperonin GroEL, plays an essential role in assisting protein folding. The GroEL-GroES system forms a nano-cage that allows encapsulation of the non-native substrate proteins and provides a physical environment optimized to promote and accelerate protein folding. GroES binds to the apical surface of the GroEL ring, thereby capping the opening of the GroEL channel. This chain is Co-chaperonin GroES, found in Pectobacterium atrosepticum (strain SCRI 1043 / ATCC BAA-672) (Erwinia carotovora subsp. atroseptica).